Consider the following 94-residue polypeptide: Putative pterin-4-alpha-carbinolamine dehydratase (94 aa).

It belongs to the pterin-4-alpha-carbinolamine dehydratase family.

It catalyses the reaction (4aS,6R)-4a-hydroxy-L-erythro-5,6,7,8-tetrahydrobiopterin = (6R)-L-erythro-6,7-dihydrobiopterin + H2O. The chain is Putative pterin-4-alpha-carbinolamine dehydratase from Mycolicibacterium smegmatis (strain ATCC 700084 / mc(2)155) (Mycobacterium smegmatis).